Here is a 511-residue protein sequence, read N- to C-terminus: MAAMDLRVAAPASVAAAARCGTSLARPWPARAVGGGGGGGGRGRRLSVRTSVATTEAAAAAVGASEDAALEARDSKTVVAVILGGGAGTRLFPLTKRRAKPAVPIGGAYRLIDVPMSNCINSGINKVYILTQFNSASLNRHLSRAYNFSNGVAFGDGFVEVLAATQTPGSEGKRWFQGTADAVRQFDWLFDDAKAKDIDDVLILSGDHLYRMDYMDFVQSHRQRGADISICCLPIDDSRASDFGLMKIDDTGRVIAFSEKPKGDDLKAMQVDTTVLGLPQDEAKEKPYIASMGVYIFKKEILLNLLRWRFPTANDFGSEIIPASAKEINVKAYLFNDYWEDIGTIKSFFEANLSLAEQPPRFSFYDANKPMYTSRRNLPPSMINNSKITDSIISHGCFLDSCRIEHSVVGIRSRIGSNVHLKDTVMLGADFYETDLERGELLAEGKVPIGIGENTKIQNCIIDKNARIGKNVTISNSEGVQEADRTSEGFYIRSGITIVLKNSIIADGLVI.

A chloroplast-targeting transit peptide spans 1 to 58; it reads MAAMDLRVAAPASVAAAARCGTSLARPWPARAVGGGGGGGGRGRRLSVRTSVATTEAA.

The protein belongs to the bacterial/plant glucose-1-phosphate adenylyltransferase family. Heterotetramer composed of two small and two large subunits. In terms of tissue distribution, expressed in leaves and stems.

It is found in the plastid. Its subcellular location is the chloroplast. It localises to the amyloplast. The catalysed reaction is alpha-D-glucose 1-phosphate + ATP + H(+) = ADP-alpha-D-glucose + diphosphate. Its pathway is glycan biosynthesis; starch biosynthesis. Its activity is regulated as follows. Activated by 3'phosphoglycerate, inhibited by orthophosphate. Allosteric regulation. In terms of biological role, involved in synthesis of starch. Catalyzes the synthesis of ADP-glucose, a molecule that serves as an activated glycosyl donor for alpha-1,4-glucan synthesis. Essential for starch synthesis in leaf chloroplasts and endosperm amyloplasts. The polypeptide is Glucose-1-phosphate adenylyltransferase large subunit 1, chloroplastic/amyloplastic (Oryza sativa subsp. japonica (Rice)).